The following is a 254-amino-acid chain: MANLSYWLLALFVATWTDVGLCKKRPKPGGWNTGGSRYPGQGSPGGNRYPPQGGGTWGQPHGGGWGQPHGGGWGQPHGGGWGQPHGGGWGQGGGTHNQWNKPSKPKTNMKHVAGAAAAGAVVGGLGGYMLGSAMSRPMLHFGNDWEDRYYRENMNRYPNQVYYRPVDQYNNQNNFVHDCVNITIKQHTVTTTTKGENFTETDVKMMERVVEQMCVTQYQKESQAYYDGRRSSAVLFSSPPVILLISFLIFLIVG.

An N-terminal signal peptide occupies residues 1-22 (MANLSYWLLALFVATWTDVGLC). Positions 23–231 (KKRPKPGGWN…SQAYYDGRRS (209 aa)) are interaction with GRB2, ERI3 and SYN1. The disordered stretch occupies residues 25–104 (RPKPGGWNTG…THNQWNKPSK (80 aa)). 5 tandem repeats follow at residues 51-59 (PQGGGTWGQ), 60-67 (PHGGGWGQ), 68-75 (PHGGGWGQ), 76-83 (PHGGGWGQ), and 84-91 (PHGGGWGQ). The interval 51–91 (PQGGGTWGQPHGGGWGQPHGGGWGQPHGGGWGQPHGGGWGQ) is 5 X 8 AA tandem repeats of P-H-G-G-G-W-G-Q. The segment covering 52–95 (QGGGTWGQPHGGGWGQPHGGGWGQPHGGGWGQPHGGGWGQGGGT) has biased composition (gly residues). Cu(2+) contacts are provided by His61, Gly62, Gly63, His69, Gly70, Gly71, His77, Gly78, Gly79, His85, Gly86, and Gly87. Residues 90 to 231 (GQGGGTHNQW…SQAYYDGRRS (142 aa)) are prP27-30 (protease resistant core). A disulfide bridge links Cys179 with Cys214. Residues Asn181 and Asn197 are each glycosylated (N-linked (GlcNAc...) asparagine). The GPI-anchor amidated serine moiety is linked to residue Ser231. The propeptide at 232 to 254 (SAVLFSSPPVILLISFLIFLIVG) is removed in mature form.

This sequence belongs to the prion family. Monomer and homodimer. Has a tendency to aggregate into amyloid fibrils containing a cross-beta spine, formed by a steric zipper of superposed beta-strands. Soluble oligomers may represent an intermediate stage on the path to fibril formation. Copper binding may promote oligomerization. Interacts with GRB2, APP, ERI3/PRNPIP and SYN1. Mislocalized cytosolically exposed PrP interacts with MGRN1; this interaction alters MGRN1 subcellular location and causes lysosomal enlargement. Interacts with KIAA1191.

The protein resides in the cell membrane. It is found in the golgi apparatus. Its function is as follows. Its primary physiological function is unclear. Has cytoprotective activity against internal or environmental stresses. May play a role in neuronal development and synaptic plasticity. May be required for neuronal myelin sheath maintenance. May play a role in iron uptake and iron homeostasis. Soluble oligomers are toxic to cultured neuroblastoma cells and induce apoptosis (in vitro). Association with GPC1 (via its heparan sulfate chains) targets PRNP to lipid rafts. Also provides Cu(2+) or Zn(2+) for the ascorbate-mediated GPC1 deaminase degradation of its heparan sulfate side chains. The protein is Major prion protein (PRNP) of Cricetulus griseus (Chinese hamster).